A 231-amino-acid chain; its full sequence is NADH-ubiquinone oxidoreductase chain 4 (231 aa).

The next 6 membrane-spanning stretches (helical) occupy residues 1 to 21 (PIAG…YGII), 34 to 54 (MFLP…LTCL), 63 to 85 (IAYS…TPWG), 89 to 111 (AMAL…NTTY), 128 to 148 (ILPM…AIPP), and 169 to 189 (TIIM…HMFL).

The protein belongs to the complex I subunit 4 family.

It localises to the mitochondrion membrane. The catalysed reaction is a ubiquinone + NADH + 5 H(+)(in) = a ubiquinol + NAD(+) + 4 H(+)(out). In terms of biological role, core subunit of the mitochondrial membrane respiratory chain NADH dehydrogenase (Complex I) that is believed to belong to the minimal assembly required for catalysis. Complex I functions in the transfer of electrons from NADH to the respiratory chain. The immediate electron acceptor for the enzyme is believed to be ubiquinone. This chain is NADH-ubiquinone oxidoreductase chain 4 (MT-ND4), found in Deinagkistrodon acutus (Hundred-pace snake).